Consider the following 361-residue polypeptide: UDP-N-acetylglucosamine--N-acetylmuramyl-(pentapeptide) pyrophosphoryl-undecaprenol N-acetylglucosamine transferase (361 aa).

UDP-N-acetyl-alpha-D-glucosamine-binding positions include 12-14, Asn124, Arg163, Ser189, Ile241, 260-265, and Gln286; these read TGG and ALTVSE.

The protein belongs to the glycosyltransferase 28 family. MurG subfamily.

It is found in the cell inner membrane. The enzyme catalyses di-trans,octa-cis-undecaprenyl diphospho-N-acetyl-alpha-D-muramoyl-L-alanyl-D-glutamyl-meso-2,6-diaminopimeloyl-D-alanyl-D-alanine + UDP-N-acetyl-alpha-D-glucosamine = di-trans,octa-cis-undecaprenyl diphospho-[N-acetyl-alpha-D-glucosaminyl-(1-&gt;4)]-N-acetyl-alpha-D-muramoyl-L-alanyl-D-glutamyl-meso-2,6-diaminopimeloyl-D-alanyl-D-alanine + UDP + H(+). It functions in the pathway cell wall biogenesis; peptidoglycan biosynthesis. In terms of biological role, cell wall formation. Catalyzes the transfer of a GlcNAc subunit on undecaprenyl-pyrophosphoryl-MurNAc-pentapeptide (lipid intermediate I) to form undecaprenyl-pyrophosphoryl-MurNAc-(pentapeptide)GlcNAc (lipid intermediate II). The chain is UDP-N-acetylglucosamine--N-acetylmuramyl-(pentapeptide) pyrophosphoryl-undecaprenol N-acetylglucosamine transferase from Aeromonas hydrophila subsp. hydrophila (strain ATCC 7966 / DSM 30187 / BCRC 13018 / CCUG 14551 / JCM 1027 / KCTC 2358 / NCIMB 9240 / NCTC 8049).